The primary structure comprises 873 residues: Actin-related protein 8 (873 aa).

The interval 108–129 (DEQVKPTSSTSSTSTTEEVEIK) is disordered. Positions 114-123 (TSSTSSTSTT) are enriched in low complexity. An ATP-binding site is contributed by 368-371 (DLGH). Positions 596-650 (NNNNNNNNSSSSSNNNNNNNNSGSNSNINSYNNNNNNNNNNNNNNNNNNNNSFNN) are enriched in low complexity. The segment at 596 to 701 (NNNNNNNNSS…TSSPTKKLKI (106 aa)) is disordered. Residues 651–668 (VTIVTSTLNSNSTVPSTL) show a composition bias toward polar residues. Over residues 669 to 696 (NSNSTVPSISNSNSTVPSTSTSTTSSPT) the composition is skewed to low complexity. The stretch at 762–804 (FKQLEQQYQAQQLQFQQQLQQQQQQQQQLQQQLQNSTNSATTT) forms a coiled coil.

The protein belongs to the actin family. ARP8 subfamily. As to quaternary structure, component of the chromatin remodeling INO80 complex. Exists as monomers and dimers, but the dimer is most probably the biologically relevant form required for stable interactions with histones that exploits the twofold symmetry of the nucleosome core.

It is found in the nucleus. The protein resides in the cytoplasm. The protein localises to the cytoskeleton. Its function is as follows. Plays an important role in the functional organization of mitotic chromosomes. Exhibits low basal ATPase activity, and unable to polymerize. In terms of biological role, proposed core component of the chromatin remodeling INO80 complex which is involved in transcriptional regulation, DNA replication and probably DNA repair. Strongly prefer nucleosomes and H3-H4 tetramers over H2A-H2B dimers, suggesting it may act as a nucleosome recognition module within the complex. The sequence is that of Actin-related protein 8 from Dictyostelium discoideum (Social amoeba).